The following is a 396-amino-acid chain: 1-deoxy-D-xylulose 5-phosphate reductoisomerase (396 aa).

NADPH-binding residues include Thr10, Gly11, Ser12, Ile13, and Asn123. Lys124 contacts 1-deoxy-D-xylulose 5-phosphate. NADPH is bound at residue Glu125. Asp149 provides a ligand contact to Mn(2+). 1-deoxy-D-xylulose 5-phosphate-binding residues include Ser150, Glu151, Ser185, and His208. Position 151 (Glu151) interacts with Mn(2+). NADPH is bound at residue Gly214. Positions 221, 226, 227, and 230 each coordinate 1-deoxy-D-xylulose 5-phosphate. Residue Glu230 coordinates Mn(2+).

Belongs to the DXR family. It depends on Mg(2+) as a cofactor. Requires Mn(2+) as cofactor.

The catalysed reaction is 2-C-methyl-D-erythritol 4-phosphate + NADP(+) = 1-deoxy-D-xylulose 5-phosphate + NADPH + H(+). It functions in the pathway isoprenoid biosynthesis; isopentenyl diphosphate biosynthesis via DXP pathway; isopentenyl diphosphate from 1-deoxy-D-xylulose 5-phosphate: step 1/6. Functionally, catalyzes the NADPH-dependent rearrangement and reduction of 1-deoxy-D-xylulose-5-phosphate (DXP) to 2-C-methyl-D-erythritol 4-phosphate (MEP). This Shewanella sp. (strain MR-4) protein is 1-deoxy-D-xylulose 5-phosphate reductoisomerase.